Reading from the N-terminus, the 106-residue chain is Large ribosomal subunit protein uL24 (106 aa).

This sequence belongs to the universal ribosomal protein uL24 family. As to quaternary structure, part of the 50S ribosomal subunit.

In terms of biological role, one of two assembly initiator proteins, it binds directly to the 5'-end of the 23S rRNA, where it nucleates assembly of the 50S subunit. Functionally, one of the proteins that surrounds the polypeptide exit tunnel on the outside of the subunit. This Rhodospirillum rubrum (strain ATCC 11170 / ATH 1.1.1 / DSM 467 / LMG 4362 / NCIMB 8255 / S1) protein is Large ribosomal subunit protein uL24.